We begin with the raw amino-acid sequence, 342 residues long: Acetoin:2,6-dichlorophenolindophenol oxidoreductase subunit beta (342 aa).

Tetramer of 2 alpha and 2 beta subunits.

The protein operates within ketone degradation; acetoin degradation. In terms of biological role, catalyzes the 2,6-dichlorophenolindophenol-dependent cleavage of acetoin into acetate and acetaldehyde. The protein is Acetoin:2,6-dichlorophenolindophenol oxidoreductase subunit beta (acoB) of Bacillus subtilis (strain 168).